Here is a 253-residue protein sequence, read N- to C-terminus: Aspartic acid-rich protein (253 aa).

A signal peptide spans 1–22; that stretch reads MYLFIYIFFFFFFFFFFVIVQK. The disordered stretch occupies residues 211–253; it reads DDFDEEFDDDDDDDDDDDDDDDDDDKDDDLDGDDDGNNDDNDD.

This sequence belongs to the nucleosome assembly protein (NAP) family.

This chain is Aspartic acid-rich protein, found in Plasmodium falciparum (isolate fcm17 / Senegal).